We begin with the raw amino-acid sequence, 431 residues long: Pyroglutamylated RF-amide peptide receptor (431 aa).

The Extracellular portion of the chain corresponds to 1–46; the sequence is MQALNITPEQFSRLLRDHNLTREQFIALYRLRPLVYTPELPGRAKL. N-linked (GlcNAc...) asparagine glycosylation is present at Asn19. A helical membrane pass occupies residues 47 to 67; sequence ALVLTGVLIFALALFGNALVF. The Cytoplasmic segment spans residues 68-81; that stretch reads YVVTRSKAMRTVTN. Residues 82-102 traverse the membrane as a helical segment; sequence IFICSLALSDLLITFFCIPVT. Over 103–120 the chain is Extracellular; that stretch reads MLQNISDNWLGGAFICKM. Residues 121-141 traverse the membrane as a helical segment; the sequence is VPFVQSTAVVTEILTMTCIAV. The Cytoplasmic portion of the chain corresponds to 142–162; sequence ERHQGLVHPFKMKWQYTNRRA. A helical membrane pass occupies residues 163 to 183; the sequence is FTMLGVVWLVAVIVGSPMWHV. Over 184–212 the chain is Extracellular; it reads QQLEIKYDFLYEKEHICCLEEWTSPVHQK. A helical membrane pass occupies residues 213–233; it reads IYTTFILVILFLLPLMVMLIL. The Cytoplasmic portion of the chain corresponds to 234–271; it reads YSKIGYELWIKKRVGDGSVLRTIHGKEMSKIARKKKRA. A helical transmembrane segment spans residues 272–292; sequence VIMMVTVVALFAVCWAPFHVV. The Extracellular segment spans residues 293–311; that stretch reads HMMIEYSNFEKEYDDVTIK. A helical transmembrane segment spans residues 312-332; that stretch reads MIFAIVQIIGFSNSICNPIVY. Residues 333 to 431 are Cytoplasmic-facing; the sequence is AFMNENFKKN…AENSPLDSGH (99 aa).

This sequence belongs to the G-protein coupled receptor 1 family. Expressed widely in the brain with high levels in the hypothalamus, trigeminal ganglia and vestibular neurons, and moderate levels in the amygdala, cortex, pituitary, hippocampus, thalamus, caudate nucleus and medulla oblongata. In peripheral tissues, expressed at high levels in the retina and at moderate levels in the heart, kidney, testis and thyroid.

The protein resides in the cell membrane. In terms of biological role, receptor for the orexigenic neuropeptide QRFP. The activity of this receptor is mediated by G proteins that modulate adenylate cyclase activity and intracellular calcium levels. The sequence is that of Pyroglutamylated RF-amide peptide receptor (QRFPR) from Homo sapiens (Human).